Here is a 434-residue protein sequence, read N- to C-terminus: Histidinol dehydrogenase (434 aa).

NAD(+) contacts are provided by Tyr-130, Gln-188, and Asn-211. Residues Ser-237, Gln-259, and His-262 each coordinate substrate. Zn(2+) contacts are provided by Gln-259 and His-262. Active-site proton acceptor residues include Glu-326 and His-327. Substrate contacts are provided by His-327, Asp-360, Glu-414, and His-419. Zn(2+) is bound at residue Asp-360. His-419 is a binding site for Zn(2+).

Belongs to the histidinol dehydrogenase family. As to quaternary structure, homodimer. The cofactor is Zn(2+).

It carries out the reaction L-histidinol + 2 NAD(+) + H2O = L-histidine + 2 NADH + 3 H(+). The protein operates within amino-acid biosynthesis; L-histidine biosynthesis; L-histidine from 5-phospho-alpha-D-ribose 1-diphosphate: step 9/9. Functionally, catalyzes the sequential NAD-dependent oxidations of L-histidinol to L-histidinaldehyde and then to L-histidine. The polypeptide is Histidinol dehydrogenase (Shigella dysenteriae serotype 1 (strain Sd197)).